Here is a 746-residue protein sequence, read N- to C-terminus: MALPLLPGFSLGRNVGKEKFHKSQHWGYCNNVAMLLAEDKPGIGGEPLPGQKLIPKSSVFPAELGCGAPAWLAFDKQVLSFDAYFEEEVPDKNQEPYRIRHCKIYFYLEDDTIQVLEPQVKNSGIIQGTIVRRHRIPLPSPNEDQFYTIDHFNINAEVIFYARRYKIIDCDQFTKHFLRKMGFKLNPPGNRPDDPYTKERQKILDSMNPLRPYERIDTLKQFLEHDGHVLRFYCVWDDPESLFHDPRELVLHYYLSDDTIDIKEVIPVNSGRDVVPLFLRRDKLPKYAPTGLYQPGTITSRTVLNVFGNLVGNRGRYILDNRKTGAVHQEFYRDSDLKIGAVINVWGRQIMLCDCDEFTKDYYRTKYGIEDFTPVPYKAPPPPKAEKPIPPYTGFGSEEDSLCSCMSLLPKPPQKDFKKFMEKDRCGLESNTLRFLAKLVTDSPIDKDRKFIICYFLMMPLYSVFEHSQRNTGIIGGKFLEKGRIKKPGQELFKSEPSEYFKAQDLFIGARVCFHGHNFLLVDADEYTINYMEKHANEFAVADTGFIFKKLKDIAEPRSREIRQVFAAADPQHTKVIEYDPFRNLIVSITDGAFSEHEIMTLGRHYGEKEEYEIDHHFLLAKAQEQLKKNSFENFEQLSTILVYNDREKCGALPYETCRTICKSFKLPLSDDLLQTILTMFEDDHKQVNYKKFVDAVNWREHQIPSFHTIKLPPKNEDDWNGQPPFLPVKRIKYLPLLDDLFGKEE.

3 DM10 domains span residues 75 to 182 (DKQV…RKMG), 226 to 367 (DGHV…RTKY), and 429 to 536 (ESNT…EKHA). The EF-hand domain maps to 557-592 (PRSREIRQVFAAADPQHTKVIEYDPFRNLIVSITDG).

It localises to the cytoplasm. The protein resides in the cytoskeleton. The protein localises to the cilium axoneme. Microtubule inner protein (MIP) part of the dynein-decorated doublet microtubules (DMTs) in cilia axoneme, which is required for motile cilia beating. This Gallus gallus (Chicken) protein is EF-hand domain-containing family member C2 (EFHC2).